The sequence spans 268 residues: tRNA (guanine-N(1)-)-methyltransferase (268 aa).

S-adenosyl-L-methionine-binding positions include G113 and I133 to L138. The interval R238–R268 is disordered.

Belongs to the RNA methyltransferase TrmD family. As to quaternary structure, homodimer.

The protein resides in the cytoplasm. It catalyses the reaction guanosine(37) in tRNA + S-adenosyl-L-methionine = N(1)-methylguanosine(37) in tRNA + S-adenosyl-L-homocysteine + H(+). In terms of biological role, specifically methylates guanosine-37 in various tRNAs. This Thermomicrobium roseum (strain ATCC 27502 / DSM 5159 / P-2) protein is tRNA (guanine-N(1)-)-methyltransferase.